Consider the following 284-residue polypeptide: Bifunctional protein FolD (284 aa).

Residues glycine 166 to serine 168 and isoleucine 232 each bind NADP(+).

Belongs to the tetrahydrofolate dehydrogenase/cyclohydrolase family. In terms of assembly, homodimer.

The catalysed reaction is (6R)-5,10-methylene-5,6,7,8-tetrahydrofolate + NADP(+) = (6R)-5,10-methenyltetrahydrofolate + NADPH. The enzyme catalyses (6R)-5,10-methenyltetrahydrofolate + H2O = (6R)-10-formyltetrahydrofolate + H(+). It functions in the pathway one-carbon metabolism; tetrahydrofolate interconversion. Catalyzes the oxidation of 5,10-methylenetetrahydrofolate to 5,10-methenyltetrahydrofolate and then the hydrolysis of 5,10-methenyltetrahydrofolate to 10-formyltetrahydrofolate. This Buchnera aphidicola subsp. Cinara cedri (strain Cc) protein is Bifunctional protein FolD.